Consider the following 144-residue polypeptide: Small ribosomal subunit protein eS19A (144 aa).

It belongs to the eukaryotic ribosomal protein eS19 family. In terms of assembly, component of the small ribosomal subunit (SSU). Mature yeast ribosomes consist of a small (40S) and a large (60S) subunit. The 40S small subunit contains 1 molecule of ribosomal RNA (18S rRNA) and 33 different proteins (encoded by 57 genes). The large 60S subunit contains 3 rRNA molecules (25S, 5.8S and 5S rRNA) and 46 different proteins (encoded by 81 genes).

The protein localises to the cytoplasm. Its function is as follows. Component of the ribosome, a large ribonucleoprotein complex responsible for the synthesis of proteins in the cell. The small ribosomal subunit (SSU) binds messenger RNAs (mRNAs) and translates the encoded message by selecting cognate aminoacyl-transfer RNA (tRNA) molecules. The large subunit (LSU) contains the ribosomal catalytic site termed the peptidyl transferase center (PTC), which catalyzes the formation of peptide bonds, thereby polymerizing the amino acids delivered by tRNAs into a polypeptide chain. The nascent polypeptides leave the ribosome through a tunnel in the LSU and interact with protein factors that function in enzymatic processing, targeting, and the membrane insertion of nascent chains at the exit of the ribosomal tunnel. eS19 is required for proper maturation of the small (40S) ribosomal subunit. Binds to 40S pre-ribosomal particles, probably required after association of NOC4 but before association of ENP1, TSR1 and RIO2 with 20/21S pre-rRNA. The polypeptide is Small ribosomal subunit protein eS19A (Saccharomyces cerevisiae (strain ATCC 204508 / S288c) (Baker's yeast)).